The sequence spans 419 residues: 3-isopropylmalate dehydratase large subunit (419 aa).

3 residues coordinate [4Fe-4S] cluster: cysteine 301, cysteine 361, and cysteine 364.

Belongs to the aconitase/IPM isomerase family. LeuC type 2 subfamily. As to quaternary structure, heterodimer of LeuC and LeuD. [4Fe-4S] cluster is required as a cofactor.

It carries out the reaction (2R,3S)-3-isopropylmalate = (2S)-2-isopropylmalate. The protein operates within amino-acid biosynthesis; L-leucine biosynthesis; L-leucine from 3-methyl-2-oxobutanoate: step 2/4. Functionally, catalyzes the isomerization between 2-isopropylmalate and 3-isopropylmalate, via the formation of 2-isopropylmaleate. This is 3-isopropylmalate dehydratase large subunit from Campylobacter hominis (strain ATCC BAA-381 / DSM 21671 / CCUG 45161 / LMG 19568 / NCTC 13146 / CH001A).